Reading from the N-terminus, the 198-residue chain is uncharacterized protein (198 aa).

This is an uncharacterized protein from Caenorhabditis elegans.